A 132-amino-acid polypeptide reads, in one-letter code: Small ribosomal subunit protein uS8 (132 aa).

It belongs to the universal ribosomal protein uS8 family. As to quaternary structure, part of the 30S ribosomal subunit. Contacts proteins S5 and S12.

One of the primary rRNA binding proteins, it binds directly to 16S rRNA central domain where it helps coordinate assembly of the platform of the 30S subunit. The protein is Small ribosomal subunit protein uS8 of Latilactobacillus sakei subsp. sakei (strain 23K) (Lactobacillus sakei subsp. sakei).